A 228-amino-acid polypeptide reads, in one-letter code: Uracil-DNA glycosylase (228 aa).

Residue Asp-64 is the Proton acceptor of the active site.

Belongs to the uracil-DNA glycosylase (UDG) superfamily. UNG family.

It is found in the cytoplasm. The catalysed reaction is Hydrolyzes single-stranded DNA or mismatched double-stranded DNA and polynucleotides, releasing free uracil.. Its function is as follows. Excises uracil residues from the DNA which can arise as a result of misincorporation of dUMP residues by DNA polymerase or due to deamination of cytosine. This Pectobacterium carotovorum subsp. carotovorum (strain PC1) protein is Uracil-DNA glycosylase.